Reading from the N-terminus, the 291-residue chain is N-acetylmannosamine kinase (291 aa).

Residues 5 to 12 (AIDIGGTK) and 132 to 139 (GVGGGVVS) contribute to the ATP site. 4 residues coordinate Zn(2+): histidine 156, cysteine 166, cysteine 168, and cysteine 173.

This sequence belongs to the ROK (NagC/XylR) family. NanK subfamily. Homodimer.

The catalysed reaction is an N-acyl-D-mannosamine + ATP = an N-acyl-D-mannosamine 6-phosphate + ADP + H(+). It participates in amino-sugar metabolism; N-acetylneuraminate degradation; D-fructose 6-phosphate from N-acetylneuraminate: step 2/5. Catalyzes the phosphorylation of N-acetylmannosamine (ManNAc) to ManNAc-6-P. The chain is N-acetylmannosamine kinase from Escherichia fergusonii (strain ATCC 35469 / DSM 13698 / CCUG 18766 / IAM 14443 / JCM 21226 / LMG 7866 / NBRC 102419 / NCTC 12128 / CDC 0568-73).